Reading from the N-terminus, the 66-residue chain is Large ribosomal subunit protein uL29 (66 aa).

This sequence belongs to the universal ribosomal protein uL29 family.

The chain is Large ribosomal subunit protein uL29 from Pseudothermotoga lettingae (strain ATCC BAA-301 / DSM 14385 / NBRC 107922 / TMO) (Thermotoga lettingae).